Here is a 301-residue protein sequence, read N- to C-terminus: MKITCNAGGLTLKNPTILAAGVLGTTGASLKRIASMGAGAVVTKSIGTEPKPGHHNPSMIRLEEGYINAMGLPNPSFGEFRQELEIARESGVPVIASIFGATPEEFTAVANGLPGADAYELNVSCPHAKGYGMQCGTDPELVRSITKAVKAAVKVPVWVKLTPNVTDIRPIGLAAQEGGADAVVAINTLKAMAIDINTGWPILGNRSGGLSGPAVKPVAIKCVYDLYEVLDIPVIGVGGVSNWADAIEFMMAGACAVEIGSAVYEDIGTFASVSMGISNYLDRKNMKLDEIIGLAHRVVKQ.

Substrate-binding positions include lysine 44, asparagine 68 to leucine 72, and asparagine 122. Lysine 44–serine 45 is a binding site for FMN. Residue asparagine 122 coordinates FMN. Catalysis depends on cysteine 125, which acts as the Nucleophile. Residues lysine 160 and isoleucine 186 each coordinate FMN. Residue asparagine 187 to threonine 188 participates in substrate binding. Residues glycine 212, glycine 238 to glycine 239, and glycine 260 to serine 261 contribute to the FMN site.

It belongs to the dihydroorotate dehydrogenase family. Type 1 subfamily. As to quaternary structure, heterotetramer of 2 PyrK and 2 PyrD type B subunits. Requires FMN as cofactor.

The protein localises to the cytoplasm. The catalysed reaction is (S)-dihydroorotate + NAD(+) = orotate + NADH + H(+). It participates in pyrimidine metabolism; UMP biosynthesis via de novo pathway; orotate from (S)-dihydroorotate (NAD(+) route): step 1/1. In terms of biological role, catalyzes the conversion of dihydroorotate to orotate with NAD(+) as electron acceptor. This chain is Dihydroorotate dehydrogenase B (NAD(+)), catalytic subunit (pyrD), found in Methanocella arvoryzae (strain DSM 22066 / NBRC 105507 / MRE50).